The following is a 538-amino-acid chain: Ribulokinase 1 (538 aa).

The protein belongs to the ribulokinase family.

It catalyses the reaction D-ribulose + ATP = D-ribulose 5-phosphate + ADP + H(+). It carries out the reaction L-ribulose + ATP = L-ribulose 5-phosphate + ADP + H(+). Its pathway is carbohydrate degradation; L-arabinose degradation via L-ribulose; D-xylulose 5-phosphate from L-arabinose (bacterial route): step 2/3. The sequence is that of Ribulokinase 1 from Staphylococcus saprophyticus subsp. saprophyticus (strain ATCC 15305 / DSM 20229 / NCIMB 8711 / NCTC 7292 / S-41).